The following is a 302-amino-acid chain: Protoheme IX farnesyltransferase (302 aa).

A run of 9 helical transmembrane segments spans residues 27–47 (VLTL…QSIH), 48–68 (PVLG…AGAL), 97–117 (SALH…GLAL), 119–139 (VLAA…YTIW), 148–168 (IVIG…AATG), 176–196 (LLFA…ALFI), 219–239 (IQIM…WAMG), 240–260 (LTGA…LLLA), and 280–300 (LFGF…ADKV).

The protein belongs to the UbiA prenyltransferase family. Protoheme IX farnesyltransferase subfamily.

The protein resides in the cell inner membrane. It carries out the reaction heme b + (2E,6E)-farnesyl diphosphate + H2O = Fe(II)-heme o + diphosphate. Its pathway is porphyrin-containing compound metabolism; heme O biosynthesis; heme O from protoheme: step 1/1. Its function is as follows. Converts heme B (protoheme IX) to heme O by substitution of the vinyl group on carbon 2 of heme B porphyrin ring with a hydroxyethyl farnesyl side group. In Rhizorhabdus wittichii (strain DSM 6014 / CCUG 31198 / JCM 15750 / NBRC 105917 / EY 4224 / RW1) (Sphingomonas wittichii), this protein is Protoheme IX farnesyltransferase.